We begin with the raw amino-acid sequence, 1102 residues long: Probable ubiquitin-conjugating enzyme E2 23 (1102 aa).

6 disordered regions span residues 1-20, 25-111, 396-418, 579-602, 661-710, and 760-800; these read MEHE…DSSV, ASLS…DGNY, LPKV…PVHE, SPGN…SHQE, DESV…DIYA, and QAES…KNIL. Over residues 31 to 44 the composition is skewed to basic and acidic residues; it reads DSEHPNIYRQDIVK. Residues 59–88 are compositionally biased toward acidic residues; that stretch reads GDSDSDSDISDEEEDDDDDEDNDDDDEDVE. Residues 579 to 596 are compositionally biased toward polar residues; that stretch reads SPGNSFEEATQQDNGYQD. The span at 779–800 shows a compositional bias: polar residues; that stretch reads SKVNVTDNCESKGTQANAKNIL. The 161-residue stretch at 850-1010 folds into the UBC core domain; sequence QWFKKVDQDW…TFLLNCKTMM (161 aa). Cysteine 936 serves as the catalytic Glycyl thioester intermediate.

Belongs to the ubiquitin-conjugating enzyme family.

It catalyses the reaction S-ubiquitinyl-[E1 ubiquitin-activating enzyme]-L-cysteine + [E2 ubiquitin-conjugating enzyme]-L-cysteine = [E1 ubiquitin-activating enzyme]-L-cysteine + S-ubiquitinyl-[E2 ubiquitin-conjugating enzyme]-L-cysteine.. The protein operates within protein modification; protein ubiquitination. Its function is as follows. Accepts the ubiquitin from the E1 complex and catalyzes its covalent attachment to other proteins. This Arabidopsis thaliana (Mouse-ear cress) protein is Probable ubiquitin-conjugating enzyme E2 23 (UBC23).